We begin with the raw amino-acid sequence, 427 residues long: Adenylosuccinate synthetase (427 aa).

GTP-binding positions include 12–18 (GDEGKGK) and 40–42 (GHT). Residue aspartate 13 is the Proton acceptor of the active site. The Mg(2+) site is built by aspartate 13 and glycine 40. Residues 13–16 (DEGK), 38–41 (NAGH), threonine 127, arginine 141, glutamine 222, threonine 237, and arginine 301 contribute to the IMP site. The active-site Proton donor is histidine 41. 297 to 303 (VVTKRPR) provides a ligand contact to substrate. GTP-binding positions include arginine 303, 329-331 (SLD), and 411-413 (AVG).

The protein belongs to the adenylosuccinate synthetase family. Homodimer. The cofactor is Mg(2+).

The protein localises to the cytoplasm. It carries out the reaction IMP + L-aspartate + GTP = N(6)-(1,2-dicarboxyethyl)-AMP + GDP + phosphate + 2 H(+). The protein operates within purine metabolism; AMP biosynthesis via de novo pathway; AMP from IMP: step 1/2. Its function is as follows. Plays an important role in the de novo pathway of purine nucleotide biosynthesis. Catalyzes the first committed step in the biosynthesis of AMP from IMP. This chain is Adenylosuccinate synthetase, found in Leuconostoc citreum (strain KM20).